Here is a 402-residue protein sequence, read N- to C-terminus: Serine--glyoxylate aminotransferase (402 aa).

The residue at position 201 (K201) is an N6-(pyridoxal phosphate)lysine.

It belongs to the class-V pyridoxal-phosphate-dependent aminotransferase family. Requires pyridoxal 5'-phosphate as cofactor.

It carries out the reaction glyoxylate + L-serine = 3-hydroxypyruvate + glycine. Its pathway is one-carbon metabolism; formaldehyde assimilation via serine pathway. This Methylorubrum extorquens (strain ATCC 14718 / DSM 1338 / JCM 2805 / NCIMB 9133 / AM1) (Methylobacterium extorquens) protein is Serine--glyoxylate aminotransferase.